We begin with the raw amino-acid sequence, 95 residues long: MVETKSKISFEDALMELEQIAEKLERQDFSLEESLKAYERGMELKKICQGILDTAEGKIEALTKDESKKTNKTGFRGESKTTETKNNTAQEEDLF.

Residues 62–83 (LTKDESKKTNKTGFRGESKTTE) show a composition bias toward basic and acidic residues. Residues 62–95 (LTKDESKKTNKTGFRGESKTTETKNNTAQEEDLF) form a disordered region.

The protein belongs to the XseB family. In terms of assembly, heterooligomer composed of large and small subunits.

The protein resides in the cytoplasm. The catalysed reaction is Exonucleolytic cleavage in either 5'- to 3'- or 3'- to 5'-direction to yield nucleoside 5'-phosphates.. Its function is as follows. Bidirectionally degrades single-stranded DNA into large acid-insoluble oligonucleotides, which are then degraded further into small acid-soluble oligonucleotides. In Leptospira interrogans serogroup Icterohaemorrhagiae serovar copenhageni (strain Fiocruz L1-130), this protein is Exodeoxyribonuclease 7 small subunit.